A 443-amino-acid polypeptide reads, in one-letter code: ATP-dependent protease ATPase subunit HslU (443 aa).

ATP-binding positions include Ile-18, 60 to 65 (GVGKTE), Asp-256, Glu-321, and Arg-393.

It belongs to the ClpX chaperone family. HslU subfamily. A double ring-shaped homohexamer of HslV is capped on each side by a ring-shaped HslU homohexamer. The assembly of the HslU/HslV complex is dependent on binding of ATP.

The protein localises to the cytoplasm. ATPase subunit of a proteasome-like degradation complex; this subunit has chaperone activity. The binding of ATP and its subsequent hydrolysis by HslU are essential for unfolding of protein substrates subsequently hydrolyzed by HslV. HslU recognizes the N-terminal part of its protein substrates and unfolds these before they are guided to HslV for hydrolysis. This is ATP-dependent protease ATPase subunit HslU from Salmonella typhi.